Reading from the N-terminus, the 209-residue chain is Kunitz trypsin inhibitor 1 (209 aa).

The first 22 residues, 1–22 (MKATISITTIFLVVALAAPSLA), serve as a signal peptide directing secretion. 2 disulfide bridges follow: Cys63-Cys107 and Cys154-Cys162. N-linked (GlcNAc...) asparagine glycosylation occurs at Asn156.

This sequence belongs to the protease inhibitor I3 (leguminous Kunitz-type inhibitor) family.

In terms of biological role, exhibits Kunitz trypsin protease inhibitor activity. The protein is Kunitz trypsin inhibitor 1 of Arabidopsis thaliana (Mouse-ear cress).